The primary structure comprises 215 residues: 3-demethoxyubiquinol 3-hydroxylase (215 aa).

Fe cation-binding residues include Glu64, Glu94, His97, Glu146, Glu178, and His181.

It belongs to the COQ7 family. It depends on Fe cation as a cofactor.

Its subcellular location is the cell membrane. The catalysed reaction is a 5-methoxy-2-methyl-3-(all-trans-polyprenyl)benzene-1,4-diol + AH2 + O2 = a 3-demethylubiquinol + A + H2O. Its pathway is cofactor biosynthesis; ubiquinone biosynthesis. Catalyzes the hydroxylation of 2-nonaprenyl-3-methyl-6-methoxy-1,4-benzoquinol during ubiquinone biosynthesis. The sequence is that of 3-demethoxyubiquinol 3-hydroxylase from Coxiella burnetii (strain Dugway 5J108-111).